The primary structure comprises 133 residues: Large ribosomal subunit protein uL22 (133 aa).

This sequence belongs to the universal ribosomal protein uL22 family. Part of the 50S ribosomal subunit.

This protein binds specifically to 23S rRNA; its binding is stimulated by other ribosomal proteins, e.g. L4, L17, and L20. It is important during the early stages of 50S assembly. It makes multiple contacts with different domains of the 23S rRNA in the assembled 50S subunit and ribosome. Functionally, the globular domain of the protein is located near the polypeptide exit tunnel on the outside of the subunit, while an extended beta-hairpin is found that lines the wall of the exit tunnel in the center of the 70S ribosome. The sequence is that of Large ribosomal subunit protein uL22 from Aquifex aeolicus (strain VF5).